The chain runs to 347 residues: Holliday junction branch migration complex subunit RuvB (347 aa).

Positions 1-183 are large ATPase domain (RuvB-L); sequence MSDERVVTPR…FGSVHRLEFY (183 aa). ATP is bound by residues Leu-22, Arg-23, Gly-64, Lys-67, Thr-68, Ser-69, 130 to 132, Arg-173, Tyr-183, and Arg-220; that span reads EDF. Thr-68 lines the Mg(2+) pocket. A small ATPAse domain (RuvB-S) region spans residues 184 to 254; sequence SVDALYEIVM…VARDALAKLE (71 aa). Positions 257-347 are head domain (RuvB-H); it reads HLGLDENDRR…NGAEQGRLWT (91 aa). DNA is bound by residues Arg-312 and Arg-317.

The protein belongs to the RuvB family. As to quaternary structure, homohexamer. Forms an RuvA(8)-RuvB(12)-Holliday junction (HJ) complex. HJ DNA is sandwiched between 2 RuvA tetramers; dsDNA enters through RuvA and exits via RuvB. An RuvB hexamer assembles on each DNA strand where it exits the tetramer. Each RuvB hexamer is contacted by two RuvA subunits (via domain III) on 2 adjacent RuvB subunits; this complex drives branch migration. In the full resolvosome a probable DNA-RuvA(4)-RuvB(12)-RuvC(2) complex forms which resolves the HJ.

It localises to the cytoplasm. The catalysed reaction is ATP + H2O = ADP + phosphate + H(+). In terms of biological role, the RuvA-RuvB-RuvC complex processes Holliday junction (HJ) DNA during genetic recombination and DNA repair, while the RuvA-RuvB complex plays an important role in the rescue of blocked DNA replication forks via replication fork reversal (RFR). RuvA specifically binds to HJ cruciform DNA, conferring on it an open structure. The RuvB hexamer acts as an ATP-dependent pump, pulling dsDNA into and through the RuvAB complex. RuvB forms 2 homohexamers on either side of HJ DNA bound by 1 or 2 RuvA tetramers; 4 subunits per hexamer contact DNA at a time. Coordinated motions by a converter formed by DNA-disengaged RuvB subunits stimulates ATP hydrolysis and nucleotide exchange. Immobilization of the converter enables RuvB to convert the ATP-contained energy into a lever motion, pulling 2 nucleotides of DNA out of the RuvA tetramer per ATP hydrolyzed, thus driving DNA branch migration. The RuvB motors rotate together with the DNA substrate, which together with the progressing nucleotide cycle form the mechanistic basis for DNA recombination by continuous HJ branch migration. Branch migration allows RuvC to scan DNA until it finds its consensus sequence, where it cleaves and resolves cruciform DNA. The sequence is that of Holliday junction branch migration complex subunit RuvB from Roseiflexus castenholzii (strain DSM 13941 / HLO8).